The following is a 266-amino-acid chain: 3-deoxy-manno-octulosonate cytidylyltransferase 1 (266 aa).

Belongs to the KdsB family.

The protein localises to the cytoplasm. The catalysed reaction is 3-deoxy-alpha-D-manno-oct-2-ulosonate + CTP = CMP-3-deoxy-beta-D-manno-octulosonate + diphosphate. It functions in the pathway nucleotide-sugar biosynthesis; CMP-3-deoxy-D-manno-octulosonate biosynthesis; CMP-3-deoxy-D-manno-octulosonate from 3-deoxy-D-manno-octulosonate and CTP: step 1/1. The protein operates within bacterial outer membrane biogenesis; lipopolysaccharide biosynthesis. Its function is as follows. Activates KDO (a required 8-carbon sugar) for incorporation into bacterial lipopolysaccharide in Gram-negative bacteria. The protein is 3-deoxy-manno-octulosonate cytidylyltransferase 1 of Paraburkholderia phytofirmans (strain DSM 17436 / LMG 22146 / PsJN) (Burkholderia phytofirmans).